A 305-amino-acid chain; its full sequence is UDP-N-acetylenolpyruvoylglucosamine reductase 2 (305 aa).

The 165-residue stretch at 33–197 folds into the FAD-binding PCMH-type domain; that stretch reads VGGKADVFVA…LEARFELEEG (165 aa). Arginine 176 is an active-site residue. The active-site Proton donor is the serine 226. Glutamate 296 is a catalytic residue.

The protein belongs to the MurB family. It depends on FAD as a cofactor.

The protein resides in the cytoplasm. It catalyses the reaction UDP-N-acetyl-alpha-D-muramate + NADP(+) = UDP-N-acetyl-3-O-(1-carboxyvinyl)-alpha-D-glucosamine + NADPH + H(+). Its pathway is cell wall biogenesis; peptidoglycan biosynthesis. Its function is as follows. Cell wall formation. This chain is UDP-N-acetylenolpyruvoylglucosamine reductase 2, found in Bacillus cereus (strain ZK / E33L).